The following is a 299-amino-acid chain: Nitrogenase iron protein (299 aa).

11–18 provides a ligand contact to ATP; that stretch reads GKGGIGKS. Cysteine 99 is a binding site for [4Fe-4S] cluster. Arginine 102 is subject to ADP-ribosylarginine; by dinitrogenase reductase ADP-ribosyltransferase. Position 133 (cysteine 133) interacts with [4Fe-4S] cluster.

This sequence belongs to the NifH/BchL/ChlL family. Homodimer. It depends on [4Fe-4S] cluster as a cofactor. Post-translationally, the reversible ADP-ribosylation of Arg-102 inactivates the nitrogenase reductase and regulates nitrogenase activity.

It carries out the reaction N2 + 8 reduced [2Fe-2S]-[ferredoxin] + 16 ATP + 16 H2O = H2 + 8 oxidized [2Fe-2S]-[ferredoxin] + 2 NH4(+) + 16 ADP + 16 phosphate + 6 H(+). In terms of biological role, the key enzymatic reactions in nitrogen fixation are catalyzed by the nitrogenase complex, which has 2 components: the iron protein and the molybdenum-iron protein. This is Nitrogenase iron protein from Rhodopseudomonas palustris (strain BisB5).